Reading from the N-terminus, the 147-residue chain is Cyanate hydratase (147 aa).

Catalysis depends on residues arginine 88, glutamate 91, and serine 114.

This sequence belongs to the cyanase family.

The catalysed reaction is cyanate + hydrogencarbonate + 3 H(+) = NH4(+) + 2 CO2. In terms of biological role, catalyzes the reaction of cyanate with bicarbonate to produce ammonia and carbon dioxide. This chain is Cyanate hydratase, found in Prochlorococcus marinus subsp. pastoris (strain CCMP1986 / NIES-2087 / MED4).